The sequence spans 1179 residues: Stress response protein NST1 (1179 aa).

Disordered regions lie at residues 1–64, 147–189, 255–351, 537–619, 660–819, 928–947, and 957–997; these read MSET…LNDP, TVNT…SNSS, KRQQ…NHSH, AAWI…EEEK, EAEE…DISQ, SSQAFNANTQAPPVYQPQLS, and SLSQ…VWNP. The segment covering 10–22 has biased composition (basic and acidic residues); that stretch reads DVSKFKNGDDVHF. Residues 24–38 are compositionally biased toward polar residues; that stretch reads YNSTTNDQTINSTNV. The span at 39–53 shows a compositional bias: basic residues; the sequence is QKKKKKKKSKNKHKG. A compositionally biased stretch (low complexity) spans 149–178; the sequence is NTSNNHQNNSNTQGGSTSTSGGALNGSSTN. Over residues 262–278 the composition is skewed to basic and acidic residues; that stretch reads YKQERDAHHDHHNHEPG. Positions 282-299 are enriched in low complexity; sequence SDTGSSGDYDGSTQQDQQ. Residues 300-347 show a composition bias toward basic and acidic residues; sequence HQYEHEIEHAFQEDEHEDECGHKNDHSHSHSHSHTENHNHSHSYDPNH. A compositionally biased stretch (acidic residues) spans 564–616; the sequence is ELEEELNDEYDEVDEDDDEGEEEGEEEEEELDDEEFEEDEEEDASDTESEISE. A coiled-coil region spans residues 648-810; it reads SQDRTRTLIE…KSAKKQDHKE (163 aa). 2 stretches are compositionally biased toward basic and acidic residues: residues 663 to 681 and 690 to 812; these read ENAKKEREMKKLRQKEKAK and AKEE…KETG. Residues 957–977 show a composition bias toward low complexity; it reads SLSQNSLSSNANENLNTNPLN.

The protein belongs to the NST1 family.

The protein localises to the cytoplasm. In terms of biological role, may act as a negative regulator of salt tolerance. This is Stress response protein NST1 (NST1) from Debaryomyces hansenii (strain ATCC 36239 / CBS 767 / BCRC 21394 / JCM 1990 / NBRC 0083 / IGC 2968) (Yeast).